The primary structure comprises 220 residues: Iron-sulfur cluster repair protein YtfE (220 aa).

This sequence belongs to the RIC family. YtfE subfamily. As to quaternary structure, homodimer.

Its subcellular location is the cytoplasm. Its function is as follows. Di-iron-containing protein involved in the repair of iron-sulfur clusters damaged by oxidative and nitrosative stress conditions. This is Iron-sulfur cluster repair protein YtfE from Escherichia coli O8 (strain IAI1).